We begin with the raw amino-acid sequence, 1230 residues long: DNA-directed RNA polymerase, mitochondrial (1230 aa).

A mitochondrion-targeting transit peptide spans 1-41 (MSALCWGRGAAGLKRALRPCGRPGLPGKEGTAGGVCGPRRS). Disordered regions lie at residues 18 to 55 (RPCG…DRRK), 95 to 115 (GSGD…KDAT), and 731 to 750 (VPAP…PHSA). Residues 732–744 (PAPPSEAPQPPEA) are compositionally biased toward pro residues. A mediates interaction with TEFM region spans residues 802 to 1230 (FRGRTYPCPP…QVKRSTYFFS (429 aa)). Residues D922, K991, and D1151 contribute to the active site.

This sequence belongs to the phage and mitochondrial RNA polymerase family. As to quaternary structure, homodimer. Component of the mitochondrial transcription initiation complex, composed at least of TFB2M, TFAM and POLRMT. In this complex TFAM recruits POLRMT to the promoter whereas TFB2M induces structural changes in POLRMT to enable promoter opening and trapping of the DNA non-template strand. Upon metabolic stress, forms a complex composed of FOXO3, SIRT3 and mitochondrial RNA polymerase POLRMT; the complex is recruited to mtDNA in a SIRT3-dependent manner. Also forms a complex composed of FOXO3, SIRT3, TFAM and POLRMT. Interacts with TFB1M and TFB2M, leading to the stimulation of transcription. Interacts with TEFM. Interacts with MTRES1.

It is found in the mitochondrion. The enzyme catalyses RNA(n) + a ribonucleoside 5'-triphosphate = RNA(n+1) + diphosphate. DNA-dependent RNA polymerase catalyzes the transcription of mitochondrial DNA into RNA using the four ribonucleoside triphosphates as substrates. Component of the mitochondrial transcription initiation complex, composed at least of TFB2M, TFAM and POLRMT that is required for basal transcription of mitochondrial DNA. In this complex, TFAM recruits POLRMT to a specific promoter whereas TFB2M induces structural changes in POLRMT to enable promoter opening and trapping of the DNA non-template strand. Has DNA primase activity. Catalyzes the synthesis of short RNA primers that are necessary for the initiation of lagging-strand DNA synthesis from the origin of light-strand DNA replication (OriL). This is DNA-directed RNA polymerase, mitochondrial from Homo sapiens (Human).